A 246-amino-acid polypeptide reads, in one-letter code: MFQLPILNFSPQQVAGVCETLEESGDVERLGRFLWSLPVAPAACEALNKNESVLRARAIVAFHGGNYRELYHILENHKFTKESHAKLQALWLEAHYQEAEKLRGRPLGPVDKYRVRKKFPLPRTIWDGEQKTHCFKERTRHLLREWYLQDPYPNPSKKRELAQATGLTPTQVGNWFKNRRQRDRAAAAKNRLQQQVLSQGSGRALRAEGDGTPEVLGVATSPAASLSSKAATSAISITSSDSECDI.

Residues 128-187 constitute a DNA-binding region (homeobox); sequence GEQKTHCFKERTRHLLREWYLQDPYPNPSKKRELAQATGLTPTQVGNWFKNRRQRDRAAA. The tract at residues 190 to 246 is disordered; it reads NRLQQQVLSQGSGRALRAEGDGTPEVLGVATSPAASLSSKAATSAISITSSDSECDI. Residues 191 to 201 are compositionally biased toward polar residues; the sequence is RLQQQVLSQGS. Residue Thr212 is modified to Phosphothreonine. Low complexity predominate over residues 219–246; it reads ATSPAASLSSKAATSAISITSSDSECDI. Phosphoserine is present on residues Ser221, Ser225, Ser227, and Ser228.

It belongs to the SIX/Sine oculis homeobox family. Interacts with TLE4 and TLE5. Expressed in the developing and adult retina. Also expressed in the hypothalamic and the pituitary regions.

It is found in the nucleus. Functionally, may be involved in eye development. In Homo sapiens (Human), this protein is Homeobox protein SIX6 (SIX6).